The sequence spans 175 residues: Large ribosomal subunit protein uL10 (175 aa).

This sequence belongs to the universal ribosomal protein uL10 family. As to quaternary structure, part of the ribosomal stalk of the 50S ribosomal subunit. The N-terminus interacts with L11 and the large rRNA to form the base of the stalk. The C-terminus forms an elongated spine to which L12 dimers bind in a sequential fashion forming a multimeric L10(L12)X complex.

In terms of biological role, forms part of the ribosomal stalk, playing a central role in the interaction of the ribosome with GTP-bound translation factors. This Xylella fastidiosa (strain M12) protein is Large ribosomal subunit protein uL10.